A 468-amino-acid chain; its full sequence is Glutamate--tRNA ligase 2 (468 aa).

The 'HIGH' region motif lies at 9–19 (PSPTGFLHIGG). A 'KMSKS' region motif is present at residues 238–242 (KLSKR). Lys-241 lines the ATP pocket.

Belongs to the class-I aminoacyl-tRNA synthetase family. Glutamate--tRNA ligase type 1 subfamily. In terms of assembly, monomer.

It localises to the cytoplasm. The enzyme catalyses tRNA(Glu) + L-glutamate + ATP = L-glutamyl-tRNA(Glu) + AMP + diphosphate. Catalyzes the attachment of glutamate to tRNA(Glu) in a two-step reaction: glutamate is first activated by ATP to form Glu-AMP and then transferred to the acceptor end of tRNA(Glu). The sequence is that of Glutamate--tRNA ligase 2 from Rhodospirillum centenum (strain ATCC 51521 / SW).